Reading from the N-terminus, the 259-residue chain is Ribonuclease HII (259 aa).

The 189-residue stretch at 70 to 258 folds into the RNase H type-2 domain; that stretch reads TLIVGIDEVG…VKSLVLGKKE (189 aa). 3 residues coordinate a divalent metal cation: D76, E77, and D168.

It belongs to the RNase HII family. The cofactor is Mn(2+). Mg(2+) serves as cofactor.

The protein localises to the cytoplasm. The enzyme catalyses Endonucleolytic cleavage to 5'-phosphomonoester.. Functionally, endonuclease that specifically degrades the RNA of RNA-DNA hybrids. This is Ribonuclease HII from Streptococcus pneumoniae (strain ATCC 700669 / Spain 23F-1).